We begin with the raw amino-acid sequence, 297 residues long: tRNA dimethylallyltransferase (297 aa).

10–17 (GITASGKS) serves as a coordination point for ATP. 12-17 (TASGKS) contacts substrate. Positions 36–39 (DSKQ) are interaction with substrate tRNA.

This sequence belongs to the IPP transferase family. As to quaternary structure, monomer. The cofactor is Mg(2+).

It catalyses the reaction adenosine(37) in tRNA + dimethylallyl diphosphate = N(6)-dimethylallyladenosine(37) in tRNA + diphosphate. Its function is as follows. Catalyzes the transfer of a dimethylallyl group onto the adenine at position 37 in tRNAs that read codons beginning with uridine, leading to the formation of N6-(dimethylallyl)adenosine (i(6)A). The chain is tRNA dimethylallyltransferase from Wolbachia pipientis wMel.